The following is a 360-amino-acid chain: Iron uptake protein A1 (360 aa).

A signal peptide spans 1–28 (MVQKLSRRLFLSIGTAFTVVVGSQLLSS). Cys-29 carries the N-palmitoyl cysteine lipid modification. Cys-29 carries the S-diacylglycerol cysteine lipid modification. The Fe cation site is built by His-54, Tyr-55, Tyr-185, Tyr-241, and Tyr-242.

This sequence belongs to the bacterial solute-binding protein 1 family.

The protein localises to the cellular thylakoid membrane. It is found in the cell membrane. Its function is as follows. Plays an important role in protecting the acceptor side of photosystem II (PSII) against oxidative damage, especially under iron-limiting growth conditions. The differing subcellular locations of futA1 (predominantly thylakoid lumen) and futA2 (predominantly periplasmic) suggest they may fulfill different roles. A major iron-binding protein involved in Fe(3+) uptake, probably part of a periplasmic ABC transporter complex futA1A2BC (TC 3.A.1.10.2) involved in Fe(3+) ion import (ferric iron). This protein and futA2 (slr0531) may be subunit proteins that have redundant or overlapping substrate-binding functions. The protein is Iron uptake protein A1 (futA1) of Synechocystis sp. (strain ATCC 27184 / PCC 6803 / Kazusa).